A 674-amino-acid chain; its full sequence is Alpha-L-arabinofuranosidase 2 (674 aa).

The signal sequence occupies residues 1-24 (MDMETSWRFLRSVCLLSFILGSFS). Residues N48, N180, N199, N210, N361, N522, and N548 are each glycosylated (N-linked (GlcNAc...) asparagine).

It belongs to the glycosyl hydrolase 51 family. As to expression, high expression in flowers, siliques and stems. Observed in the vasculature of older root tissue, at the tip of anthers and in the petal blade of fully developed flowers, in floral abscission zones and in silique replum tissue. Expressed in the cambium and phloem, but not in the xylem or in the vascular system of floral tissues.

Its subcellular location is the secreted. It is found in the extracellular space. It localises to the extracellular matrix. The catalysed reaction is Hydrolysis of terminal non-reducing alpha-L-arabinofuranoside residues in alpha-L-arabinosides.. In terms of biological role, may be involved in the coordinated dissolution of the cell wall matrix during abscission and in the secondary cell wall formation in xylem vessels. This is Alpha-L-arabinofuranosidase 2 (ASD2) from Arabidopsis thaliana (Mouse-ear cress).